Consider the following 140-residue polypeptide: uncharacterized protein (140 aa).

This is an uncharacterized protein from Mycoplasma pneumoniae (strain ATCC 29342 / M129 / Subtype 1) (Mycoplasmoides pneumoniae).